We begin with the raw amino-acid sequence, 267 residues long: 1-(5-phosphoribosyl)-5-[(5-phosphoribosylamino)methylideneamino] imidazole-4-carboxamide isomerase (267 aa).

The protein belongs to the HisA/HisF family.

The protein localises to the cytoplasm. It catalyses the reaction 1-(5-phospho-beta-D-ribosyl)-5-[(5-phospho-beta-D-ribosylamino)methylideneamino]imidazole-4-carboxamide = 5-[(5-phospho-1-deoxy-D-ribulos-1-ylimino)methylamino]-1-(5-phospho-beta-D-ribosyl)imidazole-4-carboxamide. Its pathway is amino-acid biosynthesis; L-histidine biosynthesis; L-histidine from 5-phospho-alpha-D-ribose 1-diphosphate: step 4/9. The polypeptide is 1-(5-phosphoribosyl)-5-[(5-phosphoribosylamino)methylideneamino] imidazole-4-carboxamide isomerase (HIS6) (Kluyveromyces lactis (strain ATCC 8585 / CBS 2359 / DSM 70799 / NBRC 1267 / NRRL Y-1140 / WM37) (Yeast)).